We begin with the raw amino-acid sequence, 163 residues long: ATP synthase subunit b (163 aa).

The helical transmembrane segment at 9 to 29 (GLLIAQLINVVFVVWLLTTFL) threads the bilayer.

The protein belongs to the ATPase B chain family. In terms of assembly, F-type ATPases have 2 components, F(1) - the catalytic core - and F(0) - the membrane proton channel. F(1) has five subunits: alpha(3), beta(3), gamma(1), delta(1), epsilon(1). F(0) has four main subunits: a(1), b(2) and c(10-14). The alpha and beta chains form an alternating ring which encloses part of the gamma chain. F(1) is attached to F(0) by a central stalk formed by the gamma and epsilon chains, while a peripheral stalk is formed by the delta and b chains.

It is found in the cell membrane. In terms of biological role, f(1)F(0) ATP synthase produces ATP from ADP in the presence of a proton or sodium gradient. F-type ATPases consist of two structural domains, F(1) containing the extramembraneous catalytic core and F(0) containing the membrane proton channel, linked together by a central stalk and a peripheral stalk. During catalysis, ATP synthesis in the catalytic domain of F(1) is coupled via a rotary mechanism of the central stalk subunits to proton translocation. Its function is as follows. Component of the F(0) channel, it forms part of the peripheral stalk, linking F(1) to F(0). In Roseiflexus castenholzii (strain DSM 13941 / HLO8), this protein is ATP synthase subunit b.